Reading from the N-terminus, the 218-residue chain is 7-cyano-7-deazaguanine synthase (218 aa).

ATP is bound at residue F10 to L20. Residues C186, C195, C198, and C201 each contribute to the Zn(2+) site.

The protein belongs to the QueC family. Homodimer. Zn(2+) is required as a cofactor.

The enzyme catalyses 7-carboxy-7-deazaguanine + NH4(+) + ATP = 7-cyano-7-deazaguanine + ADP + phosphate + H2O + H(+). It functions in the pathway purine metabolism; 7-cyano-7-deazaguanine biosynthesis. Its function is as follows. Catalyzes the ATP-dependent conversion of 7-carboxy-7-deazaguanine (CDG) to 7-cyano-7-deazaguanine (preQ(0)). This Exiguobacterium sibiricum (strain DSM 17290 / CCUG 55495 / CIP 109462 / JCM 13490 / 255-15) protein is 7-cyano-7-deazaguanine synthase.